Reading from the N-terminus, the 168-residue chain is GTP-dependent dephospho-CoA kinase (168 aa).

6 residues coordinate GTP: Asp-49, Ile-50, Val-51, Asp-68, Lys-70, and Glu-120.

The protein belongs to the GTP-dependent DPCK family.

It catalyses the reaction 3'-dephospho-CoA + GTP = GDP + CoA + H(+). Its pathway is cofactor biosynthesis; coenzyme A biosynthesis. Its function is as follows. Catalyzes the GTP-dependent phosphorylation of the 3'-hydroxyl group of dephosphocoenzyme A to form coenzyme A (CoA). The polypeptide is GTP-dependent dephospho-CoA kinase (Pyrobaculum islandicum (strain DSM 4184 / JCM 9189 / GEO3)).